A 416-amino-acid chain; its full sequence is Tyrosine--tRNA ligase (416 aa).

An L-tyrosine-binding site is contributed by Tyr-39. Positions 44-53 (CTAPSLHAGH) match the 'HIGH' region motif. The L-tyrosine site is built by Tyr-176 and Gln-180. Residues 236–240 (KMGKT) carry the 'KMSKS' region motif. Position 239 (Lys-239) interacts with ATP. The region spanning 349–414 (ISLVDLLHDT…AGKKRHIKVV (66 aa)) is the S4 RNA-binding domain.

The protein belongs to the class-I aminoacyl-tRNA synthetase family. TyrS type 1 subfamily. Homodimer.

The protein localises to the cytoplasm. It catalyses the reaction tRNA(Tyr) + L-tyrosine + ATP = L-tyrosyl-tRNA(Tyr) + AMP + diphosphate + H(+). Catalyzes the attachment of tyrosine to tRNA(Tyr) in a two-step reaction: tyrosine is first activated by ATP to form Tyr-AMP and then transferred to the acceptor end of tRNA(Tyr). The chain is Tyrosine--tRNA ligase from Wolbachia pipientis wMel.